Here is a 784-residue protein sequence, read N- to C-terminus: Repetin (784 aa).

The interval 1–91 (MAQLLNSILS…VQACYHKLDN (91 aa)) is S-100-like. EF-hand domains follow at residues 13 to 48 (DVFHKYAKGNGDCALLCKEELKQLLLAEFGDILQRP) and 49 to 84 (NDPETVETILNLLDQDRDGHIDFHEYLLLVFQLVQA). Ca(2+) contacts are provided by E32, D62, D64, D66, H68, and E73. 4 disordered regions span residues 92-221 (KSHG…QAKW), 282-584 (GCGQ…SHYI), 601-661 (TEGT…HQHK), and 677-784 (RDWQ…NHQR). Residues 124–201 (RHEEERQNSH…FSFDQSERQS (78 aa)) show a composition bias toward basic and acidic residues. Polar residues-rich tracts occupy residues 286–296 (TDRQGQSSHYG), 304–343 (SYHYGQTDRQGQSSHYSQTDRQGQSSHYSQPDRQGQSSHY), 356–392 (DQTNRQGQGSHYSQPNRQGQSSHYGQPDTQDQSSHYG), 400–486 (SSHY…QSSH), 504–584 (GQGQ…SHYI), 610–646 (VEQSGRSGRLSQQTPGQEGYQNQGQGFQSRDSQQNGH), and 680–695 (QSCSSEQGHRQAQTRQ). Composition is skewed to basic and acidic residues over residues 704–722 (WAEEEQGHQTWDRHSHESQ) and 729–784 (QDRR…NHQR).

This sequence belongs to the S100-fused protein family. Post-translationally, potential substrate of transglutaminase. Some arginines are probably converted to citrullines by peptidylarginine deimidase. In terms of tissue distribution, expression is scattered in the normal epidermis but strong in the acrosyringium, the inner hair root sheath and in the filiform papilli of the tongue.

Its subcellular location is the secreted. It localises to the extracellular space. It is found in the extracellular matrix. Functionally, involved in the cornified cell envelope formation. Multifunctional epidermal matrix protein. Reversibly binds calcium. This Homo sapiens (Human) protein is Repetin (RPTN).